The chain runs to 261 residues: Na(+)-translocating NADH-quinone reductase subunit C (261 aa).

The helical transmembrane segment at 12 to 32 threads the bilayer; the sequence is LGVVIGLSLVCSIIVSTAAVG. Residue Thr229 is modified to FMN phosphoryl threonine.

Belongs to the NqrC family. Composed of six subunits; NqrA, NqrB, NqrC, NqrD, NqrE and NqrF. Requires FMN as cofactor.

It is found in the cell inner membrane. The catalysed reaction is a ubiquinone + n Na(+)(in) + NADH + H(+) = a ubiquinol + n Na(+)(out) + NAD(+). In terms of biological role, NQR complex catalyzes the reduction of ubiquinone-1 to ubiquinol by two successive reactions, coupled with the transport of Na(+) ions from the cytoplasm to the periplasm. NqrA to NqrE are probably involved in the second step, the conversion of ubisemiquinone to ubiquinol. In Vibrio parahaemolyticus serotype O3:K6 (strain RIMD 2210633), this protein is Na(+)-translocating NADH-quinone reductase subunit C.